The sequence spans 385 residues: Cytochrome b (385 aa).

4 consecutive transmembrane segments (helical) span residues 32-52, 76-98, 113-133, and 179-199; these read FGAL…FLAM, WLIR…IHVF, LWNL…LGYV, and FFSL…IHVA. Heme b contacts are provided by H82 and H96. Heme b contacts are provided by H183 and H197. An a ubiquinone-binding site is contributed by H202. A run of 4 helical transmembrane segments spans residues 226-246, 290-310, 322-342, and 349-369; these read FIFK…YAVF, LGGV…PFIT, SKTI…WIGF, and YLML…SLAV.

This sequence belongs to the cytochrome b family. As to quaternary structure, the main subunits of complex b-c1 are: cytochrome b, cytochrome c1 and the Rieske protein. It depends on heme b as a cofactor.

The protein localises to the mitochondrion inner membrane. Functionally, component of the ubiquinol-cytochrome c reductase complex (complex III or cytochrome b-c1 complex) that is part of the mitochondrial respiratory chain. The b-c1 complex mediates electron transfer from ubiquinol to cytochrome c. Contributes to the generation of a proton gradient across the mitochondrial membrane that is then used for ATP synthesis. This Acanthamoeba castellanii (Amoeba) protein is Cytochrome b (MT-CYB).